The sequence spans 219 residues: 2,3-bisphosphoglycerate-dependent phosphoglycerate mutase 2 (219 aa).

Residues 8-15 (RHGQSIWN), 21-22 (TG), arginine 58, 85-88 (ERHY), lysine 96, 112-113 (RR), and 156-157 (GN) each bind substrate. Histidine 9 serves as the catalytic Tele-phosphohistidine intermediate. The Proton donor/acceptor role is filled by glutamate 85.

It belongs to the phosphoglycerate mutase family. BPG-dependent PGAM subfamily.

It catalyses the reaction (2R)-2-phosphoglycerate = (2R)-3-phosphoglycerate. The protein operates within carbohydrate degradation; glycolysis; pyruvate from D-glyceraldehyde 3-phosphate: step 3/5. Functionally, catalyzes the interconversion of 2-phosphoglycerate and 3-phosphoglycerate. The sequence is that of 2,3-bisphosphoglycerate-dependent phosphoglycerate mutase 2 from Gloeobacter violaceus (strain ATCC 29082 / PCC 7421).